The following is a 353-amino-acid chain: UPF0283 membrane protein YcjF (353 aa).

The segment covering 1 to 19 has biased composition (basic and acidic residues); that stretch reads MSEPLKPRIDFAEPLKEEP. Residues 1-35 form a disordered region; the sequence is MSEPLKPRIDFAEPLKEEPTSAFKAQQTFSEAESR. The Periplasmic segment spans residues 1 to 69; it reads MSEPLKPRID…LRPKRSLWRK (69 aa). Residues 70–90 form a helical membrane-spanning segment; it reads MVMGGLALFGASVVGQGVQWT. The Cytoplasmic portion of the chain corresponds to 91 to 99; sequence MNAWQTQDW. Residues 100 to 120 form a helical membrane-spanning segment; sequence VALGGCAAGALIVGAGVGSVV. Topologically, residues 121–212 are periplasmic; the sequence is TEWRRLWRLR…ARREISRFAA (92 aa). A helical membrane pass occupies residues 213 to 233; it reads ESTLMIAVSPLALVDMAFIAW. Residues 234-353 are Cytoplasmic-facing; sequence RNLRLINRIA…LQKSKSSPEK (120 aa).

Belongs to the UPF0283 family.

The protein resides in the cell inner membrane. In Salmonella typhimurium (strain LT2 / SGSC1412 / ATCC 700720), this protein is UPF0283 membrane protein YcjF (ycjF).